Reading from the N-terminus, the 1732-residue chain is Polycystin-1-like protein 3 (1732 aa).

A signal peptide spans 1–23 (MFFKGGSWLWLYIRTSIILGSEL). Over 24–697 (NSPAPHGQNN…IKLFLRVTNN (674 aa)) the chain is Extracellular. The region spanning 30–138 (GQNNCYQLNR…CLLKYYFICQ (109 aa)) is the C-type lectin domain. Cystine bridges form between cysteine 51-cysteine 137 and cysteine 112-cysteine 129. Asparagine 286, asparagine 363, asparagine 515, asparagine 537, and asparagine 575 each carry an N-linked (GlcNAc...) asparagine glycan. A GAIN-B domain is found at 523-685 (TSLNMSTHQL…FVVPRTVNVE (163 aa)). 2 cysteine pairs are disulfide-bonded: cysteine 635–cysteine 663 and cysteine 650–cysteine 665. The interval 635-685 (CYYWEIHNQTWSSAGCQVGPQSTILRTQCLCNHLTFFASDFFVVPRTVNVE) is GPS. Residues 698 to 718 (PVGVSLLASLLGFYVITVVWA) traverse the membrane as a helical segment. Over 719 to 905 (RKKDQADMQK…PWNQFTRVQR (187 aa)) the chain is Cytoplasmic. The PLAT domain maps to 743-860 (FHYLIQVYTG…GDCELDRVFI (118 aa)). A helical transmembrane segment spans residues 906–926 (LSCCMTLLLCNMVINVMFWKI). The Extracellular portion of the chain corresponds to 927-939 (NSTTAKRDEQMRP). The helical transmembrane segment at 940 to 960 (FAVAWSELLVSIHTAVILFPI) threads the bilayer. The Cytoplasmic segment spans residues 961-1154 (NLVIGRLFPL…ISNGLSKWLT (194 aa)). A helical membrane pass occupies residues 1155–1175 (SVCWLLLGFTSLASAFFTALY). The Extracellular portion of the chain corresponds to 1176-1198 (SLELSKDQATSWMISIILSVLQN). The helical transmembrane segment at 1199–1219 (IFISQPVKVVFFTFLYSLMMS) threads the bilayer. The Cytoplasmic segment spans residues 1220 to 1289 (RMPRLNKENE…KLTGDILVQI (70 aa)). The helical transmembrane segment at 1290-1300 (LFLTLLMTAIY) threads the bilayer. Residues 1301–1461 (SAKNSNRFYL…SFTSLQMSKK (161 aa)) are Extracellular-facing. A helical transmembrane segment spans residues 1462–1491 (GCVWSIISQVIYYLLVCYYAFIQGCQLKQQ). Over 1492–1500 (KWRFFTGKR) the chain is Cytoplasmic. Residues 1501-1519 (NILDTSIILISFILLGLDM) traverse the membrane as a helical segment. Residues 1520 to 1550 (KSISLHKKNMARYRDDQDRFISFYEAVKVNS) are Extracellular-facing. A helical membrane pass occupies residues 1551–1572 (AATHLVGFPVLLATVQLWNLLR). The Cytoplasmic segment spans residues 1573–1589 (HSPRLRVISRTLSRAWD). A helical transmembrane segment spans residues 1590-1614 (EVVGFLLIILILLTGYAIAFNLLFG). The segment at 1613-1651 (FGCSISDYRTFFSSAVTVVGLLMGISHQEEVFALDPVLG) is channel pore-region. The Extracellular segment spans residues 1615-1647 (CSISDYRTFFSSAVTVVGLLMGISHQEEVFALD). Residues 1648–1667 (PVLGTFLILTSVILMVLVVI) form a helical membrane-spanning segment. Topologically, residues 1668–1732 (NLFVSAILMA…SDTEVLDELP (65 aa)) are cytoplasmic.

The protein belongs to the polycystin family. Heterotetramer with PKD2L1, composed of 3 subunit of PKD2L1 and 1 subunit of PKD1L3. Post-translationally, autoproteolytically processed at the GPS region of the GAIN-B domain; this cleavage modulates receptor activity. As to expression, highly expressed in placenta, weakly in heart and lung.

It is found in the cell membrane. The enzyme catalyses Ca(2+)(in) = Ca(2+)(out). The catalysed reaction is Na(+)(in) = Na(+)(out). It catalyses the reaction K(+)(in) = K(+)(out). It carries out the reaction Mg(2+)(in) = Mg(2+)(out). With respect to regulation, the non-selective cation channel is gated following an off-response property by acid: gated open after the removal of acid stimulus, but not during acid application. Regulation of non-selective cation channel activity by external Ca(2+) is bimodal, first sensitizing and subsequently inactivating the current. Pore-forming subunit of a heterotetrameric, non-selective cation channel that is permeable to Ca(2+). Also shows permeability towards NA(1+), K(+) and Mg(2+). Heterotetrameric complex channel is activated by external low pH and Ca(2+), but opens only when the extracellular pH rises again and after the removal of acid stimulus. May act as a sour taste receptor in gustatory cells; however, its contribution to sour taste perception is unclear in vivo and may be indirect. This chain is Polycystin-1-like protein 3, found in Homo sapiens (Human).